Reading from the N-terminus, the 394-residue chain is Phosphopentomutase (394 aa).

The Mn(2+) site is built by Asp-15, Asp-288, His-293, Asp-329, His-330, and His-341.

Belongs to the phosphopentomutase family. The cofactor is Mn(2+).

Its subcellular location is the cytoplasm. It carries out the reaction 2-deoxy-alpha-D-ribose 1-phosphate = 2-deoxy-D-ribose 5-phosphate. The catalysed reaction is alpha-D-ribose 1-phosphate = D-ribose 5-phosphate. It participates in carbohydrate degradation; 2-deoxy-D-ribose 1-phosphate degradation; D-glyceraldehyde 3-phosphate and acetaldehyde from 2-deoxy-alpha-D-ribose 1-phosphate: step 1/2. Functionally, isomerase that catalyzes the conversion of deoxy-ribose 1-phosphate (dRib-1-P) and ribose 1-phosphate (Rib-1-P) to deoxy-ribose 5-phosphate (dRib-5-P) and ribose 5-phosphate (Rib-5-P), respectively. This Bacillus licheniformis (strain ATCC 14580 / DSM 13 / JCM 2505 / CCUG 7422 / NBRC 12200 / NCIMB 9375 / NCTC 10341 / NRRL NRS-1264 / Gibson 46) protein is Phosphopentomutase.